The sequence spans 183 residues: Large ribosomal subunit protein uL5 (183 aa).

It belongs to the universal ribosomal protein uL5 family. Part of the 50S ribosomal subunit; part of the 5S rRNA/L5/L18/L25 subcomplex. Contacts the 5S rRNA and the P site tRNA. Forms a bridge to the 30S subunit in the 70S ribosome.

In terms of biological role, this is one of the proteins that bind and probably mediate the attachment of the 5S RNA into the large ribosomal subunit, where it forms part of the central protuberance. In the 70S ribosome it contacts protein S13 of the 30S subunit (bridge B1b), connecting the 2 subunits; this bridge is implicated in subunit movement. Contacts the P site tRNA; the 5S rRNA and some of its associated proteins might help stabilize positioning of ribosome-bound tRNAs. The chain is Large ribosomal subunit protein uL5 from Legionella pneumophila (strain Lens).